The sequence spans 255 residues: NAD kinase (255 aa).

Asp-44 functions as the Proton acceptor in the catalytic mechanism. Residues 44–45, 114–115, Asp-144, Ala-152, and 155–160 contribute to the NAD(+) site; these read DG, NE, and TAYNLS.

It belongs to the NAD kinase family. A divalent metal cation serves as cofactor.

The protein resides in the cytoplasm. The enzyme catalyses NAD(+) + ATP = ADP + NADP(+) + H(+). Its function is as follows. Involved in the regulation of the intracellular balance of NAD and NADP, and is a key enzyme in the biosynthesis of NADP. Catalyzes specifically the phosphorylation on 2'-hydroxyl of the adenosine moiety of NAD to yield NADP. The protein is NAD kinase of Hyphomonas neptunium (strain ATCC 15444).